The following is a 580-amino-acid chain: Phosphatase and actin regulator 1 (580 aa).

Phosphoserine is present on residues Ser-67 and Ser-78. Residue Thr-104 is modified to Phosphothreonine. Positions 108–129 (RRRSKFANLGRIFKPWKWRKKK) match the Nuclear localization signal motif. Residues 138-163 (AALERKISMRQSREELIKRGVLKEIY) form an RPEL 1 repeat. A disordered region spans residues 331–351 (EQRVPCSTSYHSSGLHSSDGV). Positions 337-348 (STSYHSSGLHSS) are enriched in low complexity. 3 RPEL repeats span residues 422–447 (DSLA…PRQT), 460–485 (TKLT…KPRN), and 498–523 (RRLT…IRFS). The segment at 462–494 (LTRRLSQRPTAEELEQRNILKPRNEQEEQEEKR) is disordered. Phosphoserine is present on Ser-467. Residues 471–494 (TAEELEQRNILKPRNEQEEQEEKR) are compositionally biased toward basic and acidic residues. Residue Ser-505 is modified to Phosphoserine.

It belongs to the phosphatase and actin regulator family. Interacts (via RPEL repeats) with ACTA1 and PPP1CA; ACTA1 and PPP1CA compete for the same binding site. As to expression, selectively expressed in brain. High levels are found in the olfactory tubercle, nucleus accumbens core and shell, caudate-putamen, cerebral cortex, hippocampus and piriform cortex. Moderate to high levels in the olfactory bulb, arcuate and ventromedial hypothalamus, subthalamic nucleus, amygdala, lateral septum, habenula and thalamus. Low expression, if any, in substantia nigra pars compacta/pars reticula and globus pallidus (at protein level).

Its subcellular location is the cytoplasm. The protein localises to the synapse. It is found in the nucleus. In terms of biological role, binds actin monomers (G actin) and plays a role in multiple processes including the regulation of actin cytoskeleton dynamics, actin stress fibers formation, cell motility and survival, formation of tubules by endothelial cells, and regulation of PPP1CA activity. Involved in the regulation of cortical neuron migration and dendrite arborization. In Rattus norvegicus (Rat), this protein is Phosphatase and actin regulator 1 (Phactr1).